Consider the following 25-residue polypeptide: Omega-conotoxin MVIIB (25 aa).

Cystine bridges form between Cys-1–Cys-16, Cys-8–Cys-20, and Cys-15–Cys-25. Cys-25 is subject to Cysteine amide.

Belongs to the conotoxin O1 superfamily. As to expression, expressed by the venom duct.

The protein resides in the secreted. Omega-conotoxins act at presynaptic membranes, they bind and block voltage-gated calcium channels (Cav). The sequence is that of Omega-conotoxin MVIIB from Conus magus (Magical cone).